The chain runs to 591 residues: Protein CBFA2T3 (591 aa).

A disordered region spans residues 1–105; sequence MPGGTPRLEG…SSSASLSTHQ (105 aa). The tract at residues 1 to 381 is mediates localization to the nucleus; it reads MPGGTPRLEG…ADREELNHWI (381 aa). A compositionally biased stretch (pro residues) spans 41–52; sequence STPPNMPPPPPA. Residues 55-105 show a composition bias toward polar residues; the sequence is QGATRHPSFTPSTMMNGSSHSPTAINGAPSTPNGFSNGPATSSSASLSTHQ. One can recognise a TAFH domain in the interval 112–207; that stretch reads ARQLSKLKRF…SPAQYLAQHE (96 aa). Disordered regions lie at residues 226 to 291 and 386 to 420; these read LEVS…PPQH and DAED…DFAP. The span at 230-256 shows a compositional bias: basic and acidic residues; the sequence is ESGKRRTPDRTKENGLDRDPLHPEHLS. Over residues 263-274 the composition is skewed to polar residues; that stretch reads SPAQRYSPSNGL. Residues 279–290 are compositionally biased toward pro residues; sequence NGLPHPPGPPPQ. Residues 394 to 410 are compositionally biased toward low complexity; sequence SPPSARPHNSSSSSEAP. Residues 433 to 488 adopt a coiled-coil conformation; the sequence is RKAEEAVNEVKRQAMSELQKAVSDAERKAHELITTERAKMERALAEAKRQASEDAL. Residues Cys501, Cys504, Cys512, Cys515, Cys521, Cys525, His533, and Cys537 each coordinate Zn(2+). The MYND-type zinc finger occupies 501–537; sequence CWNCGRKASETCSGCNTARYCGSFCQHKDWEKHHHVC. The segment at 548–591 is disordered; sequence SVPTAVGQPEAVPPMASSPSDAGSAGASRAGTPGTPAPLESASR. Residues 560-585 show a composition bias toward low complexity; sequence PPMASSPSDAGSAGASRAGTPGTPAP.

It belongs to the CBFA2T family.

It localises to the nucleus. It is found in the nucleolus. The protein localises to the nucleoplasm. The protein resides in the golgi apparatus. Functions as a transcriptional repressor. Regulates the proliferation and the differentiation of erythroid progenitors. Plays a role in granulocyte differentiation. May also function as an A-kinase-anchoring protein. The sequence is that of Protein CBFA2T3 (CBFA2T3) from Gallus gallus (Chicken).